A 430-amino-acid chain; its full sequence is Adenylosuccinate synthetase (430 aa).

GTP is bound by residues 12 to 18 (GDEGKGK) and 40 to 42 (GHT). Asp-13 serves as the catalytic Proton acceptor. Mg(2+)-binding residues include Asp-13 and Gly-40. IMP contacts are provided by residues 13–16 (DEGK), 38–41 (NAGH), Thr-128, Arg-142, Gln-223, Thr-238, and Arg-302. Catalysis depends on His-41, which acts as the Proton donor. Residue 298–304 (TTTGRPR) coordinates substrate. Residues Arg-304, 330–332 (SID), and 412–414 (SVG) each bind GTP.

Belongs to the adenylosuccinate synthetase family. Homodimer. Requires Mg(2+) as cofactor.

The protein resides in the cytoplasm. It catalyses the reaction IMP + L-aspartate + GTP = N(6)-(1,2-dicarboxyethyl)-AMP + GDP + phosphate + 2 H(+). It participates in purine metabolism; AMP biosynthesis via de novo pathway; AMP from IMP: step 1/2. In terms of biological role, plays an important role in the de novo pathway of purine nucleotide biosynthesis. Catalyzes the first committed step in the biosynthesis of AMP from IMP. This chain is Adenylosuccinate synthetase, found in Exiguobacterium sibiricum (strain DSM 17290 / CCUG 55495 / CIP 109462 / JCM 13490 / 255-15).